The primary structure comprises 154 residues: Protein disulfide-isomerase LQY1, chloroplastic (154 aa).

Residues 1 to 43 (MPVSAPSPPRLHSPFIHCPINFTPSSFSARNLRSPSTSYPRIK) constitute a chloroplast transit peptide. Residues 51–71 (VVAISVGVASVALGIGIPVFY) form a helical membrane-spanning segment. Residues 77–147 (NAAKRENTQP…SGVQPRYLDR (71 aa)) form a CR-type zinc finger. Positions 87, 90, 98, 101, 121, 124, 132, and 135 each coordinate Zn(2+).

The protein belongs to the BSD2 chaperone family. In terms of assembly, interacts with the photosystem II core subunits. Interacts with HHL1. Zn(2+) serves as cofactor.

The protein resides in the plastid. Its subcellular location is the chloroplast thylakoid membrane. It catalyses the reaction Catalyzes the rearrangement of -S-S- bonds in proteins.. In terms of biological role, protein disulfide-isomerase probably involved upon formation of a complex with HHL1 in maintaining photosystem II (PSII) activity under high light by regulating repair and reassembly of PSII complexes. The protein is Protein disulfide-isomerase LQY1, chloroplastic of Arabidopsis thaliana (Mouse-ear cress).